We begin with the raw amino-acid sequence, 135 residues long: Large ribosomal subunit protein uL16c (135 aa).

It belongs to the universal ribosomal protein uL16 family. Part of the 50S ribosomal subunit.

Its subcellular location is the plastid. The protein resides in the chloroplast. The sequence is that of Large ribosomal subunit protein uL16c from Jasminum nudiflorum (Winter jasmine).